Here is a 177-residue protein sequence, read N- to C-terminus: Parathyroid hormone-related protein (177 aa).

A signal peptide spans 1–24; the sequence is MLWRLVQQWSVAVFLLSYSVPSCG. The propeptide occupies 25 to 34; the sequence is RSVEELGRRL. Residues 57 to 68 are important for receptor binding; sequence RFFLHHLIAEIH. Residues 74 to 149 form a disordered region; the sequence is ATSEVSPNSK…KRRTRSAWLT (76 aa). Residues 76–90 are compositionally biased toward polar residues; sequence SEVSPNSKPAPNTKN. The Nuclear localization signal signature appears at 108–129; it reads TNKVETYKEQPLKTPGKKKKSK. Basic and acidic residues predominate over residues 109-118; sequence NKVETYKEQP. Basic residues predominate over residues 122 to 132; the sequence is PGKKKKSKPGK.

It belongs to the parathyroid hormone family. As to quaternary structure, PTHrP interacts with PTH1R (via N-terminal extracellular domain). Post-translationally, there are several secretory forms, including osteostatin, arising from endoproteolytic cleavage of the initial translation product. Each of these secretory forms is believed to have one or more of its own receptors that mediates the normal paracrine, autocrine and endocrine actions.

Its subcellular location is the secreted. It is found in the cytoplasm. The protein localises to the nucleus. In terms of biological role, neuroendocrine peptide which is a critical regulator of cellular and organ growth, development, migration, differentiation and survival and of epithelial calcium ion transport. Acts by binding to its receptor, PTH1R, activating G protein-coupled receptor signaling. Regulates endochondral bone development and epithelial-mesenchymal interactions during the formation of the mammary glands and teeth. Required for skeletal homeostasis. Promotes mammary mesenchyme differentiation and bud outgrowth by modulating mesenchymal cell responsiveness to BMPs. Up-regulates BMPR1A expression in the mammary mesenchyme and this increases the sensitivity of these cells to BMPs and allows them to respond to BMP4 in a paracrine and/or autocrine fashion. BMP4 signaling in the mesenchyme, in turn, triggers epithelial outgrowth and augments MSX2 expression, which causes the mammary mesenchyme to inhibit hair follicle formation within the nipple sheath. Its function is as follows. Potent inhibitor of osteoclastic bone resorption. In Bos taurus (Bovine), this protein is Parathyroid hormone-related protein (PTHLH).